Consider the following 397-residue polypeptide: uncharacterized protein (397 aa).

[4Fe-4S] cluster contacts are provided by Cys47, Cys53, Cys56, and Cys131. S-adenosyl-L-methionine-binding residues include Gln235, Phe262, Glu282, and Asp328. The active-site Nucleophile is the Cys354.

This sequence belongs to the class I-like SAM-binding methyltransferase superfamily. RNA M5U methyltransferase family.

This is an uncharacterized protein from Zymomonas mobilis subsp. mobilis (strain ATCC 31821 / ZM4 / CP4).